Here is an 888-residue protein sequence, read N- to C-terminus: DNA mismatch repair protein MutS (888 aa).

An ATP-binding site is contributed by 641-648; sequence GPNMAGKS.

The protein belongs to the DNA mismatch repair MutS family.

Its function is as follows. This protein is involved in the repair of mismatches in DNA. It is possible that it carries out the mismatch recognition step. This protein has a weak ATPase activity. The sequence is that of DNA mismatch repair protein MutS from Rickettsia bellii (strain RML369-C).